Consider the following 72-residue polypeptide: MSKEDVIEVEGKVVEALPNAMFEVELENGHKVLAHISGKLRMNFIRILPGDKVTVELSPYDLTRGRITWRAK.

Residues 1–72 (MSKEDVIEVE…TRGRITWRAK (72 aa)) form the S1-like domain.

Belongs to the IF-1 family. As to quaternary structure, component of the 30S ribosomal translation pre-initiation complex which assembles on the 30S ribosome in the order IF-2 and IF-3, IF-1 and N-formylmethionyl-tRNA(fMet); mRNA recruitment can occur at any time during PIC assembly.

It is found in the cytoplasm. One of the essential components for the initiation of protein synthesis. Stabilizes the binding of IF-2 and IF-3 on the 30S subunit to which N-formylmethionyl-tRNA(fMet) subsequently binds. Helps modulate mRNA selection, yielding the 30S pre-initiation complex (PIC). Upon addition of the 50S ribosomal subunit IF-1, IF-2 and IF-3 are released leaving the mature 70S translation initiation complex. This chain is Translation initiation factor IF-1, found in Acetivibrio thermocellus (strain ATCC 27405 / DSM 1237 / JCM 9322 / NBRC 103400 / NCIMB 10682 / NRRL B-4536 / VPI 7372) (Clostridium thermocellum).